We begin with the raw amino-acid sequence, 254 residues long: MTPQRIGFVASSAPVAQEALNVMAARYGQCPLPEADAIVALGGDGFMLQTLHETQSLDIPVYGMNRGTVGFLMNGYAEDGLRERLAEAEEEILNPLAMTAVTGAGEVFHRIAINEVSLLRAGPQAAWLKISVDGKVRMEELVCDGALVCTPAGSTAYNYSAHGPILPIGADVLALTAIAPFRPRRWRGALLPKTALVRFDVIDAQKRPVMADADGRSVRDVVSVEIRTEPAVRHRLLFDPGHGLEERLIREQFV.

Asp44 serves as the catalytic Proton acceptor. NAD(+) is bound by residues 44–45 (DG), 114–115 (NE), Asp144, Ala152, 155–160 (TAYNYS), and Ala179.

It belongs to the NAD kinase family. A divalent metal cation serves as cofactor.

It is found in the cytoplasm. The catalysed reaction is NAD(+) + ATP = ADP + NADP(+) + H(+). Its function is as follows. Involved in the regulation of the intracellular balance of NAD and NADP, and is a key enzyme in the biosynthesis of NADP. Catalyzes specifically the phosphorylation on 2'-hydroxyl of the adenosine moiety of NAD to yield NADP. The protein is NAD kinase of Cereibacter sphaeroides (strain ATCC 17029 / ATH 2.4.9) (Rhodobacter sphaeroides).